A 434-amino-acid chain; its full sequence is Enolase (434 aa).

Q166 provides a ligand contact to (2R)-2-phosphoglycerate. Catalysis depends on E208, which acts as the Proton donor. Mg(2+) contacts are provided by D245, E290, and D317. Positions 342, 371, 372, and 393 each coordinate (2R)-2-phosphoglycerate. K342 functions as the Proton acceptor in the catalytic mechanism.

It belongs to the enolase family. Requires Mg(2+) as cofactor.

It is found in the cytoplasm. The protein localises to the secreted. Its subcellular location is the cell surface. It carries out the reaction (2R)-2-phosphoglycerate = phosphoenolpyruvate + H2O. The protein operates within carbohydrate degradation; glycolysis; pyruvate from D-glyceraldehyde 3-phosphate: step 4/5. Its function is as follows. Catalyzes the reversible conversion of 2-phosphoglycerate (2-PG) into phosphoenolpyruvate (PEP). It is essential for the degradation of carbohydrates via glycolysis. The protein is Enolase of Caldicellulosiruptor bescii (strain ATCC BAA-1888 / DSM 6725 / KCTC 15123 / Z-1320) (Anaerocellum thermophilum).